The chain runs to 587 residues: Membrane protein insertase YidC (587 aa).

The next 5 helical transmembrane spans lie at 5 to 25 (SVIG…FMKP), 365 to 385 (GLII…LSLA), 430 to 450 (LGGC…FYVF), 480 to 500 (LPLY…TVFF), and 516 to 536 (IMIW…PSGL).

The protein belongs to the OXA1/ALB3/YidC family. Type 1 subfamily. Interacts with the Sec translocase complex via SecD. Specifically interacts with transmembrane segments of nascent integral membrane proteins during membrane integration.

The protein localises to the cell inner membrane. In terms of biological role, required for the insertion and/or proper folding and/or complex formation of integral membrane proteins into the membrane. Involved in integration of membrane proteins that insert both dependently and independently of the Sec translocase complex, as well as at least some lipoproteins. Aids folding of multispanning membrane proteins. This is Membrane protein insertase YidC from Chlorobaculum parvum (strain DSM 263 / NCIMB 8327) (Chlorobium vibrioforme subsp. thiosulfatophilum).